The sequence spans 222 residues: Pleckstrin homology domain-containing family B member 2 (222 aa).

Residues 2–109 enclose the PH domain; that stretch reads AFVKSGWLLR…WKFTLQDSRT (108 aa). Residue Lys20 participates in a 1,2-diacyl-sn-glycero-3-phospho-L-serine binding.

The protein resides in the recycling endosome membrane. Functionally, involved in retrograde transport of recycling endosomes. This Homo sapiens (Human) protein is Pleckstrin homology domain-containing family B member 2 (PLEKHB2).